We begin with the raw amino-acid sequence, 719 residues long: Endonuclease MutS2 (719 aa).

Position 273-280 (273-280) interacts with ATP; that stretch reads GPNTGGKT. One can recognise a Smr domain in the interval 644–719; that stretch reads LDLRGYRYED…GFGVTVATLK (76 aa).

The protein belongs to the DNA mismatch repair MutS family. MutS2 subfamily. In terms of assembly, homodimer. Binds to stalled ribosomes, contacting rRNA.

Endonuclease that is involved in the suppression of homologous recombination and thus may have a key role in the control of bacterial genetic diversity. Its function is as follows. Acts as a ribosome collision sensor, splitting the ribosome into its 2 subunits. Detects stalled/collided 70S ribosomes which it binds and splits by an ATP-hydrolysis driven conformational change. Acts upstream of the ribosome quality control system (RQC), a ribosome-associated complex that mediates the extraction of incompletely synthesized nascent chains from stalled ribosomes and their subsequent degradation. Probably generates substrates for RQC. The sequence is that of Endonuclease MutS2 from Staphylococcus aureus.